The primary structure comprises 200 residues: Holliday junction branch migration complex subunit RuvA (200 aa).

The interval 1–64 is domain I; sequence MIGHLRGIIV…EDAHTLYGFH (64 aa). The domain II stretch occupies residues 65–143; it reads NDHERRLFRA…RWHTNDTPSP (79 aa). The segment at 144–148 is flexible linker; sequence EGLRS. The domain III stretch occupies residues 149-200; the sequence is SNTQPTQDAISALMALGYKPQEAKRAIDAIQKPDLSAETLIRLALKQMVLGT.

Belongs to the RuvA family. Homotetramer. Forms an RuvA(8)-RuvB(12)-Holliday junction (HJ) complex. HJ DNA is sandwiched between 2 RuvA tetramers; dsDNA enters through RuvA and exits via RuvB. An RuvB hexamer assembles on each DNA strand where it exits the tetramer. Each RuvB hexamer is contacted by two RuvA subunits (via domain III) on 2 adjacent RuvB subunits; this complex drives branch migration. In the full resolvosome a probable DNA-RuvA(4)-RuvB(12)-RuvC(2) complex forms which resolves the HJ.

The protein resides in the cytoplasm. Its function is as follows. The RuvA-RuvB-RuvC complex processes Holliday junction (HJ) DNA during genetic recombination and DNA repair, while the RuvA-RuvB complex plays an important role in the rescue of blocked DNA replication forks via replication fork reversal (RFR). RuvA specifically binds to HJ cruciform DNA, conferring on it an open structure. The RuvB hexamer acts as an ATP-dependent pump, pulling dsDNA into and through the RuvAB complex. HJ branch migration allows RuvC to scan DNA until it finds its consensus sequence, where it cleaves and resolves the cruciform DNA. The protein is Holliday junction branch migration complex subunit RuvA of Coxiella burnetii (strain CbuG_Q212) (Coxiella burnetii (strain Q212)).